A 274-amino-acid polypeptide reads, in one-letter code: NH(3)-dependent NAD(+) synthetase (274 aa).

46-53 (GISGGQDS) is a binding site for ATP. D52 serves as a coordination point for Mg(2+). R140 contributes to the deamido-NAD(+) binding site. Residue T160 coordinates ATP. E165 contributes to the Mg(2+) binding site. The deamido-NAD(+) site is built by K173 and D180. 2 residues coordinate ATP: K189 and T211. 260–261 (HK) is a binding site for deamido-NAD(+).

This sequence belongs to the NAD synthetase family. Homodimer.

It catalyses the reaction deamido-NAD(+) + NH4(+) + ATP = AMP + diphosphate + NAD(+) + H(+). Its pathway is cofactor biosynthesis; NAD(+) biosynthesis; NAD(+) from deamido-NAD(+) (ammonia route): step 1/1. Functionally, catalyzes the ATP-dependent amidation of deamido-NAD to form NAD. Uses ammonia as a nitrogen source. In Streptococcus pneumoniae (strain 70585), this protein is NH(3)-dependent NAD(+) synthetase.